Here is a 506-residue protein sequence, read N- to C-terminus: Maturase K (506 aa).

The protein belongs to the intron maturase 2 family. MatK subfamily.

It localises to the plastid. The protein resides in the chloroplast. Its function is as follows. Usually encoded in the trnK tRNA gene intron. Probably assists in splicing its own and other chloroplast group II introns. This chain is Maturase K, found in Ocimum basilicum (Sweet basil).